Consider the following 590-residue polypeptide: Aspartate--tRNA(Asp/Asn) ligase (590 aa).

Glu173 provides a ligand contact to L-aspartate. Residues 197 to 200 (QIFK) are aspartate. Arg219 serves as a coordination point for L-aspartate. ATP-binding positions include 219–221 (RDE) and Gln228. His450 contacts L-aspartate. Glu484 contacts ATP. Arg491 is a binding site for L-aspartate. Residue 536-539 (GLDR) participates in ATP binding.

It belongs to the class-II aminoacyl-tRNA synthetase family. Type 1 subfamily. In terms of assembly, homodimer.

It is found in the cytoplasm. The enzyme catalyses tRNA(Asx) + L-aspartate + ATP = L-aspartyl-tRNA(Asx) + AMP + diphosphate. Aspartyl-tRNA synthetase with relaxed tRNA specificity since it is able to aspartylate not only its cognate tRNA(Asp) but also tRNA(Asn). Reaction proceeds in two steps: L-aspartate is first activated by ATP to form Asp-AMP and then transferred to the acceptor end of tRNA(Asp/Asn). The polypeptide is Aspartate--tRNA(Asp/Asn) ligase (Coxiella burnetii (strain Dugway 5J108-111)).